The following is a 261-amino-acid chain: Thiazole synthase (261 aa).

The active-site Schiff-base intermediate with DXP is the Lys-102. 1-deoxy-D-xylulose 5-phosphate is bound by residues Gly-163, 189-190 (AG), and 211-212 (NT).

Belongs to the ThiG family. As to quaternary structure, homotetramer. Forms heterodimers with either ThiH or ThiS.

The protein localises to the cytoplasm. The catalysed reaction is [ThiS sulfur-carrier protein]-C-terminal-Gly-aminoethanethioate + 2-iminoacetate + 1-deoxy-D-xylulose 5-phosphate = [ThiS sulfur-carrier protein]-C-terminal Gly-Gly + 2-[(2R,5Z)-2-carboxy-4-methylthiazol-5(2H)-ylidene]ethyl phosphate + 2 H2O + H(+). Its pathway is cofactor biosynthesis; thiamine diphosphate biosynthesis. Its function is as follows. Catalyzes the rearrangement of 1-deoxy-D-xylulose 5-phosphate (DXP) to produce the thiazole phosphate moiety of thiamine. Sulfur is provided by the thiocarboxylate moiety of the carrier protein ThiS. In vitro, sulfur can be provided by H(2)S. The polypeptide is Thiazole synthase (Acinetobacter baumannii (strain SDF)).